A 132-amino-acid polypeptide reads, in one-letter code: Transcription antitermination protein NusB (132 aa).

This sequence belongs to the NusB family.

Functionally, involved in transcription antitermination. Required for transcription of ribosomal RNA (rRNA) genes. Binds specifically to the boxA antiterminator sequence of the ribosomal RNA (rrn) operons. The sequence is that of Transcription antitermination protein NusB from Campylobacter jejuni subsp. doylei (strain ATCC BAA-1458 / RM4099 / 269.97).